Reading from the N-terminus, the 431-residue chain is Ornithine decarboxylase (431 aa).

N6-(pyridoxal phosphate)lysine is present on lysine 94. Pyridoxal 5'-phosphate is bound by residues serine 226, glycine 264, and 297-300 (EPGR). 340-341 (YD) provides a ligand contact to substrate. Residue cysteine 376 is the Proton donor; shared with dimeric partner of the active site. Aspartate 377 lines the substrate pocket. Position 405 (tyrosine 405) interacts with pyridoxal 5'-phosphate.

The protein belongs to the Orn/Lys/Arg decarboxylase class-II family. As to quaternary structure, homodimer. Only the dimer is catalytically active, as the active sites are constructed of residues from both monomers. It depends on pyridoxal 5'-phosphate as a cofactor.

The catalysed reaction is L-ornithine + H(+) = putrescine + CO2. It participates in amine and polyamine biosynthesis; putrescine biosynthesis via L-ornithine pathway; putrescine from L-ornithine: step 1/1. Inhibited by antizyme (AZ) in response to polyamine levels. AZ inhibits the assembly of the functional homodimer by binding to ODC monomers and targeting them for ubiquitin-independent proteolytic destruction by the 26S proteasome. In terms of biological role, catalyzes the first and rate-limiting step of polyamine biosynthesis that converts ornithine into putrescine, which is the precursor for the polyamines, spermidine and spermine. Polyamines are essential for cell proliferation and are implicated in cellular processes, ranging from DNA replication to apoptosis. The protein is Ornithine decarboxylase of Datura stramonium (Jimsonweed).